We begin with the raw amino-acid sequence, 63 residues long: Putative F-box protein At1g47702 (63 aa).

Residues 23–63 form the F-box domain; it reads KDRISDLPNRILGKIIVKLPLDEAVRIMALSKRWKSIWDDN.

The sequence is that of Putative F-box protein At1g47702 from Arabidopsis thaliana (Mouse-ear cress).